A 375-amino-acid polypeptide reads, in one-letter code: uncharacterized protein (375 aa).

The segment at 54 to 78 is disordered; it reads EGIPPPTQSQEPLKPQENISRPIHH.

This is an uncharacterized protein from Bos taurus (Bovine).